The chain runs to 320 residues: Phosphate acyltransferase (320 aa).

This sequence belongs to the PlsX family. As to quaternary structure, homodimer. Probably interacts with PlsY.

Its subcellular location is the cytoplasm. It catalyses the reaction a fatty acyl-[ACP] + phosphate = an acyl phosphate + holo-[ACP]. It participates in lipid metabolism; phospholipid metabolism. In terms of biological role, catalyzes the reversible formation of acyl-phosphate (acyl-PO(4)) from acyl-[acyl-carrier-protein] (acyl-ACP). This enzyme utilizes acyl-ACP as fatty acyl donor, but not acyl-CoA. This chain is Phosphate acyltransferase, found in Syntrophomonas wolfei subsp. wolfei (strain DSM 2245B / Goettingen).